Reading from the N-terminus, the 305-residue chain is 5'-hydroxyaverantin dehydrogenase stcG (305 aa).

Positions 25, 27, 48, 68, 186, 190, and 221 each coordinate NADP(+). Y186 serves as the catalytic Proton acceptor. Catalysis depends on K190, which acts as the Lowers pKa of active site Tyr.

This sequence belongs to the short-chain dehydrogenases/reductases (SDR) family.

The enzyme catalyses (1'S,5'S)-5'-hydroxyaverantin + NAD(+) = (S)-5'-oxoaverantin + NADH + H(+). It catalyses the reaction (1'S,5'R)-5'-hydroxyaverantin + NAD(+) = (S)-5'-oxoaverantin + NADH + 2 H(+). Its pathway is mycotoxin biosynthesis; sterigmatocystin biosynthesis. Functionally, 5'-hydroxyaverantin dehydrogenase; part of the gene cluster that mediates the biosynthesis of sterigmatocystin (ST), a polyketide-derived furanocoumarin which is part of the most toxic and carcinogenic compounds among the known mycotoxins. The first step in the biosynthesis of sterigmatocystin is the production of hexanoate by the fatty acid synthase (FAS) units stcJ and stcK. The polyketide backbone is assembled by the non-reducing polyketide synthase stcA by condensation of the starter hexanoyl-CoA and 7 malonyl-CoA extender units followed by cyclization and release of norsolorinic acid. Norsolorinic acid is the first stable intermediate in the biosynthesis of sterigmatocystin and is converted into averantin (AVN) by the ketoreductase stcE which reduces the hexanoate ketone to an alcohol. Averantin is then oxidized into 5'-hydroxyaverantin (HAVN) by the cytochrome P450 monooxygenase stcF. 5'-hydroxyaverantin is further converted to 5'-oxyaverantin (OAVN) by the 5'-hydroxyaverantin dehydrogenase stcG. The next step is the conversion of OAVN into averufin (AVF) which is catalyzed by a yet to be identified enzyme. The cytochrome P450 monooxygenase stcB and the flavin-binding monooxygenase stcW are both required for the conversion of averufin to 1-hydroxyversicolorone. The esterase stcI probably catalyzes the formation of versiconal hemiacetal acetate from 1-hydroxyversicolorone. The oxydoreductase stcN then probably catalyzes the biosynthetic step from versiconal to versicolorin B (VERB). The next step is performed by the versicolorin B desaturase stcL to produce versicolorin A (VERA). The ketoreductase stcU and the cytochrome P450 monooxygenase stcS are involved in the conversion of versicolorin A to demethylsterigmatocystin. The Baeyer-Villiger oxidas stcQ and the reductase stcR might be involved in the biosynthetic step from versicolorin A to demethylsterigmatocystin. The final step in the biosynthesis of sterigmatocystin is the methylation of demethylsterigmatocystin catalyzed by the methyltransferase stcP. The sequence is that of 5'-hydroxyaverantin dehydrogenase stcG from Emericella nidulans (strain FGSC A4 / ATCC 38163 / CBS 112.46 / NRRL 194 / M139) (Aspergillus nidulans).